We begin with the raw amino-acid sequence, 622 residues long: Ferredoxin-fold anticodon-binding domain-containing protein 1 homolog (622 aa).

Positions 529 to 622 (LYPPCYVHDV…IQRQLHVSPR (94 aa)) constitute an FDX-ACB domain.

This is Ferredoxin-fold anticodon-binding domain-containing protein 1 homolog (Fdxacb1) from Mus musculus (Mouse).